We begin with the raw amino-acid sequence, 671 residues long: Anaphase-promoting complex subunit cut9 (671 aa).

The interval 1–24 (MVVKRTQTDSRMQSTPGNHNHPDA) is disordered. TPR repeat units follow at residues 83–114 (REDYLRLWRHDALMQQQYKCAAFVGEKVLDIT), 117–142 (PNDAFWLAQVYCCTGDYARAKCLLTK), 150–173 (SACRYLAAFCLVKLYDWQGALNLL), 198–229 (LEASMCYLRGQVYTNLSNFDRAKECYKEALMV), 234–257 (YEAFDQLVSNHLLTADEEWDLVLK), 268–296 (AAFLRSLYMLKLNKTSHEDELRRAEDYLS), 306–334 (DLLLCKADTLFVRSRFIDVLAITTKILEI), 341–368 (VYPLHLASLHESGEKNKLYLISNDLVDR), 373–402 (AVTWLAVGIYYLCVNKISEARRYFSKSSTM), 407–435 (GPAWIGFAHSFAIEGEHDQAISAYTTAAR), 442–470 (LPYLFLGMQHMQLGNILLANEYLQSSYAL), 475–507 (PLLLNELGVVAFNKSDMQTAINHFQNALLLVKK), 513–545 (KPWAATWANLGHAYRKLKMYDAAIDALNQGLLL), and 550–579 (ANVHTAIALVYLHKKIPGLAITHLHESLAI). The disordered stretch occupies residues 622 to 643 (NLNTSDKSMSMEDQSGKVTESV).

The APC/C is composed of at least 13 subunits: apc1, apc2, nuc2, apc4, apc5, cut9, apc8, apc10, apc11, hcn1, apc13, apc14 and apc15. Homodimer. Interacts directly with nuc2 and hcn1. Phosphorylated.

The protein localises to the nucleus. In terms of biological role, component of the anaphase-promoting complex/cyclosome (APC/C), a cell cycle-regulated E3 ubiquitin-protein ligase complex that controls progression through mitosis and the G1 phase of the cell cycle. The APC/C is thought to confer substrate specificity and, in the presence of ubiquitin-conjugating E2 enzymes, it catalyzes the formation of protein-ubiquitin conjugates that are subsequently degraded by the 26S proteasome. May play a pivotal role in the control of anaphase. The protein is Anaphase-promoting complex subunit cut9 (cut9) of Schizosaccharomyces pombe (strain 972 / ATCC 24843) (Fission yeast).